The following is a 370-amino-acid chain: F-box protein At3g20690 (370 aa).

Positions 1–45 (MMMSDLPHDLVEEILSRLPLISLKAMRSTCKTWNVLSKHRSFANK) constitute an F-box domain.

In Arabidopsis thaliana (Mouse-ear cress), this protein is F-box protein At3g20690.